Reading from the N-terminus, the 229-residue chain is MIQTTFPDRAVMAELVAKMLWEIKAVHFNAGEPYKLSSGMASPVYIDCRKLLSYPRIRSTVMDFAASTLMRDAGFEQFDCIAGGETAGIPFAALLADRLGLPMIYVRKQPKGHGRNAQIEGNMPEGSRVLVIEDLTTAGGSMFKFIDAVRAAGGIVDHGIALFFYDIFGQQRFTDGKVRLHHIATWRNVLAVAKAQQLFDDKTLAEVEAFLDAPLAWSGRNGGVCELSL.

5-phospho-alpha-D-ribose 1-diphosphate-binding positions include Arg107, Lys108, Lys111, His113, and 133-141 (EDLTTAGGS). Thr137 contributes to the orotate binding site.

The protein belongs to the purine/pyrimidine phosphoribosyltransferase family. PyrE subfamily. Homodimer. The cofactor is Mg(2+).

The catalysed reaction is orotidine 5'-phosphate + diphosphate = orotate + 5-phospho-alpha-D-ribose 1-diphosphate. It functions in the pathway pyrimidine metabolism; UMP biosynthesis via de novo pathway; UMP from orotate: step 1/2. Catalyzes the transfer of a ribosyl phosphate group from 5-phosphoribose 1-diphosphate to orotate, leading to the formation of orotidine monophosphate (OMP). The chain is Orotate phosphoribosyltransferase from Rhizobium etli (strain CIAT 652).